Reading from the N-terminus, the 477-residue chain is UDP-N-acetylmuramate--L-alanine ligase (477 aa).

An ATP-binding site is contributed by 122–128 (GTHGKTT).

Belongs to the MurCDEF family.

The protein resides in the cytoplasm. It catalyses the reaction UDP-N-acetyl-alpha-D-muramate + L-alanine + ATP = UDP-N-acetyl-alpha-D-muramoyl-L-alanine + ADP + phosphate + H(+). The protein operates within cell wall biogenesis; peptidoglycan biosynthesis. In terms of biological role, cell wall formation. This is UDP-N-acetylmuramate--L-alanine ligase from Xanthomonas oryzae pv. oryzae (strain MAFF 311018).